The following is a 306-amino-acid chain: Glutamyl-Q tRNA(Asp) synthetase (306 aa).

L-glutamate is bound by residues 29-33 (RFAPS) and aspartate 65. The short motif at 32 to 42 (PSPTGPLHLGN) is the 'HIGH' region element. Cysteine 121, cysteine 123, tyrosine 141, and cysteine 145 together coordinate Zn(2+). Positions 188 and 206 each coordinate L-glutamate. The short motif at 244 to 248 (KLAKR) is the 'KMSKS' region element. Residue lysine 247 participates in ATP binding.

The protein belongs to the class-I aminoacyl-tRNA synthetase family. GluQ subfamily. It depends on Zn(2+) as a cofactor.

Functionally, catalyzes the tRNA-independent activation of glutamate in presence of ATP and the subsequent transfer of glutamate onto a tRNA(Asp). Glutamate is transferred on the 2-amino-5-(4,5-dihydroxy-2-cyclopenten-1-yl) moiety of the queuosine in the wobble position of the QUC anticodon. The polypeptide is Glutamyl-Q tRNA(Asp) synthetase (Prochlorococcus marinus (strain MIT 9313)).